Here is a 195-residue protein sequence, read N- to C-terminus: Peptidyl-tRNA hydrolase (195 aa).

Tyr-17 is a binding site for tRNA. His-22 serves as the catalytic Proton acceptor. 3 residues coordinate tRNA: Tyr-68, Asn-70, and Asn-116.

It belongs to the PTH family. In terms of assembly, monomer.

It is found in the cytoplasm. It catalyses the reaction an N-acyl-L-alpha-aminoacyl-tRNA + H2O = an N-acyl-L-amino acid + a tRNA + H(+). In terms of biological role, hydrolyzes ribosome-free peptidyl-tRNAs (with 1 or more amino acids incorporated), which drop off the ribosome during protein synthesis, or as a result of ribosome stalling. Functionally, catalyzes the release of premature peptidyl moieties from peptidyl-tRNA molecules trapped in stalled 50S ribosomal subunits, and thus maintains levels of free tRNAs and 50S ribosomes. This chain is Peptidyl-tRNA hydrolase, found in Shewanella sp. (strain MR-4).